The following is a 347-amino-acid chain: Transcription termination/antitermination protein NusA (347 aa).

The S1 motif domain maps to 112–184 (GEIVAGVIQR…REPLITLSRT (73 aa)). Positions 287–347 (ARAARVVVPD…GVSRGMAHDR (61 aa)) constitute a KH domain. The disordered stretch occupies residues 322-347 (DIRGDAPPPPPGQPEPGVSRGMAHDR).

This sequence belongs to the NusA family. In terms of assembly, monomer. Binds directly to the core enzyme of the DNA-dependent RNA polymerase and to nascent RNA.

The protein resides in the cytoplasm. In terms of biological role, participates in both transcription termination and antitermination. This chain is Transcription termination/antitermination protein NusA, found in Mycobacterium bovis (strain ATCC BAA-935 / AF2122/97).